Here is a 456-residue protein sequence, read N- to C-terminus: NADPH-ferredoxin reductase FprA (456 aa).

FAD contacts are provided by Ser17, Glu43, Leu51, and Val87. Residues Arg113, 158–161 (NGNV), 202–203 (RR), and Glu214 each bind NADP(+). Residues Trp362 and 369–371 (GVI) contribute to the FAD site. NADP(+) is bound at residue Gly369.

The protein belongs to the ferredoxin--NADP reductase type 1 family. As to quaternary structure, monomer. FAD is required as a cofactor.

It carries out the reaction 2 reduced [2Fe-2S]-[ferredoxin] + NADP(+) + H(+) = 2 oxidized [2Fe-2S]-[ferredoxin] + NADPH. Its function is as follows. May serve as electron transfer protein and supply electrons to P450 systems. The sequence is that of NADPH-ferredoxin reductase FprA (fprA) from Mycobacterium leprae (strain TN).